The sequence spans 410 residues: Multifunctional CCA protein (410 aa).

2 residues coordinate ATP: glycine 8 and arginine 11. The CTP site is built by glycine 8 and arginine 11. Residues aspartate 21 and aspartate 23 each contribute to the Mg(2+) site. The ATP site is built by arginine 91, arginine 138, and arginine 141. 3 residues coordinate CTP: arginine 91, arginine 138, and arginine 141. The region spanning 229 to 347 (TGVHQEMVSD…AQLALVCEAD (119 aa)) is the HD domain.

The protein belongs to the tRNA nucleotidyltransferase/poly(A) polymerase family. Bacterial CCA-adding enzyme type 1 subfamily. Monomer. Can also form homodimers and oligomers. The cofactor is Mg(2+). Ni(2+) serves as cofactor.

The catalysed reaction is a tRNA precursor + 2 CTP + ATP = a tRNA with a 3' CCA end + 3 diphosphate. It catalyses the reaction a tRNA with a 3' CCA end + 2 CTP + ATP = a tRNA with a 3' CCACCA end + 3 diphosphate. In terms of biological role, catalyzes the addition and repair of the essential 3'-terminal CCA sequence in tRNAs without using a nucleic acid template. Adds these three nucleotides in the order of C, C, and A to the tRNA nucleotide-73, using CTP and ATP as substrates and producing inorganic pyrophosphate. tRNA 3'-terminal CCA addition is required both for tRNA processing and repair. Also involved in tRNA surveillance by mediating tandem CCA addition to generate a CCACCA at the 3' terminus of unstable tRNAs. While stable tRNAs receive only 3'-terminal CCA, unstable tRNAs are marked with CCACCA and rapidly degraded. In Xanthomonas campestris pv. campestris (strain B100), this protein is Multifunctional CCA protein.